Reading from the N-terminus, the 467-residue chain is ESX-4 secretion system protein eccD4 (467 aa).

Helical transmembrane passes span 122–142 (GALA…RNAL), 152–172 (ATAG…VIAC), 186–206 (VIAT…VPGV), 209–229 (VLVA…ITGC), 241–261 (AVVV…VPAI), 264–284 (LATL…VLLA), 319–339 (LTSL…GTAV), 344–364 (IHRS…LLLL), 374–394 (SLVF…VAAD), 401–421 (PWIA…GFVA), and 439–459 (CLAL…YSAV).

This sequence belongs to the EccD/Snm4 family. Part of the ESX-4 / type VII secretion system (T7SS), which is composed of cytosolic and membrane components.

The protein localises to the cell membrane. The protein is ESX-4 secretion system protein eccD4 (eccD4) of Mycobacterium tuberculosis (strain CDC 1551 / Oshkosh).